The following is a 626-amino-acid chain: Colicin-Ib (626 aa).

Residues 276 to 286 show a composition bias toward polar residues; it reads QQLTQQKNTPD. The interval 276-308 is disordered; it reads QQLTQQKNTPDGKTIVSPEKFPGRSSTNHSIVV. A helical transmembrane segment spans residues 588 to 612; the sequence is FSVMLGTPVGILGFAIIMAAVSALV.

Belongs to the channel forming colicin family.

The protein localises to the host membrane. In terms of biological role, this colicin is a channel-forming colicin. This class of transmembrane toxins depolarize the cytoplasmic membrane, leading to dissipation of cellular energy. Functionally, colicins are polypeptide toxins produced by and active against E.coli and closely related bacteria. The polypeptide is Colicin-Ib (cib) (Escherichia coli).